The chain runs to 98 residues: MALTKAEMAEHLFETLGINKRVAKEMVESFFEEIRGALESGEQVKLSGFGNFDLRDKNQRPGRNPKTGEDIPISARRVVTFRPGQKLKTRVEAANTGK.

The interval 49-71 (FGNFDLRDKNQRPGRNPKTGEDI) is disordered.

Belongs to the bacterial histone-like protein family. In terms of assembly, heterodimer of an alpha and a beta chain.

In terms of biological role, this protein is one of the two subunits of integration host factor, a specific DNA-binding protein that functions in genetic recombination as well as in transcriptional and translational control. The polypeptide is Integration host factor subunit alpha (Shewanella oneidensis (strain ATCC 700550 / JCM 31522 / CIP 106686 / LMG 19005 / NCIMB 14063 / MR-1)).